A 215-amino-acid polypeptide reads, in one-letter code: High frequency lysogenization protein HflD homolog (215 aa).

Belongs to the HflD family.

It is found in the cytoplasm. Its subcellular location is the cell inner membrane. The protein is High frequency lysogenization protein HflD homolog of Haemophilus ducreyi (strain 35000HP / ATCC 700724).